The sequence spans 215 residues: Pyrrolidone-carboxylate peptidase (215 aa).

Catalysis depends on residues glutamate 78, cysteine 141, and histidine 165.

The protein belongs to the peptidase C15 family. In terms of assembly, homotetramer.

It is found in the cytoplasm. It carries out the reaction Release of an N-terminal pyroglutamyl group from a polypeptide, the second amino acid generally not being Pro.. Functionally, removes 5-oxoproline from various penultimate amino acid residues except L-proline. This is Pyrrolidone-carboxylate peptidase from Lactobacillus johnsonii (strain CNCM I-12250 / La1 / NCC 533).